A 392-amino-acid chain; its full sequence is Tryptophan 2,3-dioxygenase (392 aa).

Substrate-binding positions include 57-61 (FIVTH) and R128. H313 provides a ligand contact to heme. T328 is a binding site for substrate.

It belongs to the tryptophan 2,3-dioxygenase family. As to quaternary structure, homotetramer. Dimer of dimers. Heme serves as cofactor.

It carries out the reaction L-tryptophan + O2 = N-formyl-L-kynurenine. It participates in amino-acid degradation; L-tryptophan degradation via kynurenine pathway; L-kynurenine from L-tryptophan: step 1/2. It functions in the pathway pigment biosynthesis; ommochrome biosynthesis. In terms of biological role, heme-dependent dioxygenase that catalyzes the oxidative cleavage of the L-tryptophan (L-Trp) pyrrole ring and converts L-tryptophan to N-formyl-L-kynurenine. Catalyzes the oxidative cleavage of the indole moiety. This is Tryptophan 2,3-dioxygenase from Anopheles gambiae (African malaria mosquito).